We begin with the raw amino-acid sequence, 394 residues long: D-mannose isomerase (394 aa).

Residues histidine 251 and histidine 380 each act as proton donor/acceptor in the active site.

This sequence belongs to the N-acylglucosamine 2-epimerase family. As to quaternary structure, monomer.

The enzyme catalyses D-mannose = D-fructose. It catalyses the reaction D-lyxose = D-xylulose. In terms of biological role, catalyzes the reversible isomerization of D-mannose to D-fructose. Can also isomerize D-lyxose, with lower efficiency. In longer reaction with a higher concentration of enzyme, it can isomerize 4-OH D-mannose derivatives (D-talose and 4-O-monosaccharyl-D-mannose). Cannot use D-glucose. In Marinomonas mediterranea (strain ATCC 700492 / JCM 21426 / NBRC 103028 / MMB-1), this protein is D-mannose isomerase.